The sequence spans 309 residues: DSC E3 ubiquitin ligase complex subunit C (309 aa).

N-linked (GlcNAc...) asparagine glycosylation occurs at Asn61. Disordered regions lie at residues 88–110 and 148–177; these read LPPSPSRTPVVQEDATTVKGKGK and EQADEGYTGRKKQQQPPPSTTSAPRGFDRL. Helical transmembrane passes span 257–277 and 289–309; these read DDMLWGAVMGFFWPVGCAMWL and GLAVFVGVVINVAFGAMRIMN.

The protein belongs to the dsc3 family. Component of the DSC E3 ubiquitin ligase complex composed of dscA, dscB, dscC and dscD.

Its subcellular location is the endoplasmic reticulum membrane. It participates in protein modification; protein ubiquitination. Functionally, component of the DSC E3 ubiquitin ligase complex which is required for the srbA transcriptional activator proteolytic cleavage to release the soluble transcription factor from the membrane in low oxygen or sterol conditions. Required for growth during hypoxia and triazole drug susceptibility, as well as for virulence in a murine model of invasive pulmonary aspergillosis (IPA). The sequence is that of DSC E3 ubiquitin ligase complex subunit C from Aspergillus fumigatus (strain CBS 144.89 / FGSC A1163 / CEA10) (Neosartorya fumigata).